Here is a 1082-residue protein sequence, read N- to C-terminus: MMSGTGNVSSMLHSYSANIQHNDGSPDLDLLESELLDIALLNSGSSLQDPGLLSLNQEKMITAGTTTPGKEDEGELRDDIASLQGLLDRHVQFGRKLPLRTPYANPLDFININPQSLPLSLEIIGLPKVSRVETQMKLSFRIRNAHARKNFFIHLPSDCIAKDKFFTSSDDPTNLTIPNRDINERTLFLDAFLLCASNNNSNNFKQTYVCNRCINREKRRASRRKSGLNDNSIWQNNENKRAIIFNSKQLFIISNNGLSGNSNCINFDLPTRIVCYCRHHKATNGFVVLFLLRDHNGDILAKTITDPIMIMDKKNASNTTTPTSTSNAQVSPMTNDTRSFSSPQSDLNFPSEFPLPSNSKNFVISTNCMLDSNCNNNNNDNDNKNNIKTNTAMMNNNRHFPSPNSSSEDSNHSFSDIHFSNNNDNNLHRSLDSWSSTGFNSSSNPALTTLTSDFSAASARHTGKRQRSVNEPFMSTPNTFSRLPQKFIDSSKDISNHNSVPVALNNKPSIQRVIPAQGSINGGIEVTLLGSKFKQGLIIKFGENIALSSQCWNESTMVTYLPPSSKPGPVLVTIVDPSETSMRNNSNSSVSTSNSTNDILHLNKYTGEKAIFTYVDDTDRQLIELALQIVGLKMNGKLEDARNIAKRIVGSDSSPSNNNAGLHSQNSSLNSYTNMMRNINDEQLITEVIKSFKRNNNLSTVNLSMCDVRGRTLLHLAAFNNWYSLVSLLIKYGSHLNDQDLFGFTPLHMACINGDLRIIRLLLECNVNIMKKTRNGFIAKQFFLMNYTVNKTRYSNYETSLFDDILTRLTKNTTGSSDTQPFERNVSQSSFNSSLFDDDDADHDYVQERKYLLADSAALAPEQSNCNDNTSFSILDSDSGYDISDCESSSDEIALEFFNTHKIKDFSSKPNEIPKTTKTSIEPDGSLWNRMLTRLNDELPKYEDLFPKKPKNWELGSKSVEIGPDNSAQMTVDDSQTSSEDDELEALQVGFNTIFSKKQNFQNDKMLLFFWIPLTLVLLLCFTLSNLGKDDDMFHNLSKIVQEYLRIGLAKVLLGNERMKTSFKMQLSKFQNNNILNDMRVN.

Disordered stretches follow at residues 315–346 (NASN…PQSD), 376–417 (NNNN…FSDI), and 457–476 (ASAR…FMST). Positions 316 to 328 (ASNTTTPTSTSNA) are enriched in low complexity. A compositionally biased stretch (polar residues) spans 329 to 346 (QVSPMTNDTRSFSSPQSD). 2 stretches are compositionally biased toward low complexity: residues 376 to 391 (NNNN…KTNT) and 399 to 416 (HFPS…SFSD). S468 is subject to Phosphoserine. Positions 508-585 (PSIQRVIPAQ…DPSETSMRNN (78 aa)) constitute an IPT/TIG domain. ANK repeat units lie at residues 709-738 (RGRT…HLND) and 742-771 (FGFT…NIMK).

In terms of biological role, dosage-dependent suppressor of Ty-induced promoter mutations. May exert its suppression effect through protein-protein interactions since does not present any of the motifs generally found in transcriptional activators or DNA binding proteins. The protein is Protein SPT23 (SPT23) of Saccharomyces cerevisiae (strain ATCC 204508 / S288c) (Baker's yeast).